Here is an 84-residue protein sequence, read N- to C-terminus: Anaphase-promoting complex subunit 11 (84 aa).

12 residues coordinate Zn(2+): Cys-23, Cys-26, Cys-34, Cys-37, Cys-44, Cys-51, His-53, His-56, His-58, Cys-59, Cys-73, and Cys-76. The RING-type zinc-finger motif lies at 34–77; it reads CPDCKVPGDDCPLVWGQCSHCFHMHCILKWLNAQQVQQHCPMCR.

The protein belongs to the RING-box family. As to quaternary structure, the mammalian APC/C is composed at least of 14 distinct subunits ANAPC1, ANAPC2, CDC27/APC3, ANAPC4, ANAPC5, CDC16/APC6, ANAPC7, CDC23/APC8, ANAPC10, ANAPC11, CDC26/APC12, ANAPC13, ANAPC15 and ANAPC16 that assemble into a complex of at least 19 chains with a combined molecular mass of around 1.2 MDa; APC/C interacts with FZR1 and FBXO5. Interacts with the cullin domain of ANAPC2. Interacts with UBE2D2. In terms of processing, auto-ubiquitinated.

The protein localises to the cytoplasm. It is found in the nucleus. The protein operates within protein modification; protein ubiquitination. Together with the cullin protein ANAPC2, constitutes the catalytic component of the anaphase promoting complex/cyclosome (APC/C), a cell cycle-regulated E3 ubiquitin ligase that controls progression through mitosis and the G1 phase of the cell cycle. The APC/C complex acts by mediating ubiquitination and subsequent degradation of target proteins: it mainly mediates the formation of 'Lys-11'-linked polyubiquitin chains and, to a lower extent, the formation of 'Lys-48'- and 'Lys-63'-linked polyubiquitin chains. The APC/C complex catalyzes assembly of branched 'Lys-11'-/'Lys-48'-linked branched ubiquitin chains on target proteins. May recruit the E2 ubiquitin-conjugating enzymes to the complex. This chain is Anaphase-promoting complex subunit 11 (ANAPC11), found in Bos taurus (Bovine).